The following is a 508-amino-acid chain: Glycoprotein (508 aa).

The N-terminal stretch at 1 to 20 (MDTMITTPLILILITCGANS) is a signal peptide. At 21-461 (QTVKPDTASE…SFDLQSLHWS (441 aa)) the chain is on the virion surface side. N-linked (GlcNAc...) asparagine; by host glycosylation is found at N56, N400, N401, and N438. A helical transmembrane segment spans residues 462–482 (FWPTISALGGIPLVLLLAVAA). Topologically, residues 483-508 (CCCWSGRPPTPSAPQSIPMYHLANRS) are intravirion.

Belongs to the novirhabdovirus glycoprotein family. Homotrimer.

It is found in the virion membrane. Its function is as follows. Binds to specific receptor at cellular surface, bringing about the attachment of the virus particle to the cell. Plays a major role in the determination of host range restriction and virulence. Class I viral fusion protein. Responsible for penetration of the viral nucleocapsid into the cell cytoplasm by mediating the fusion of the membrane of the endocytosed virus particle with the endosomal membrane. Low pH in endosomes induce an irreversible conformational change in G, releasing a fusion hydrophobic peptide. The polypeptide is Glycoprotein (G) (Salmo (IHNV)).